Consider the following 85-residue polypeptide: Protein RALF-like 28 (85 aa).

A signal peptide spans methionine 1–alanine 31. 2 disulfides stabilise this stretch: cysteine 48-cysteine 53 and cysteine 66-cysteine 72. Residues asparagine 60–isoleucine 85 are disordered. Residues proline 75–isoleucine 85 show a composition bias toward pro residues.

This sequence belongs to the plant rapid alkalinization factor (RALF) family.

The protein localises to the secreted. Functionally, cell signaling peptide that may regulate plant stress, growth, and development. Mediates a rapid alkalinization of extracellular space by mediating a transient increase in the cytoplasmic Ca(2+) concentration leading to a calcium-dependent signaling events through a cell surface receptor and a concomitant activation of some intracellular mitogen-activated protein kinases. The chain is Protein RALF-like 28 (RALFL28) from Arabidopsis thaliana (Mouse-ear cress).